Consider the following 233-residue polypeptide: Probable 2-phosphosulfolactate phosphatase (233 aa).

The protein belongs to the ComB family. It depends on Mg(2+) as a cofactor.

It catalyses the reaction (2R)-O-phospho-3-sulfolactate + H2O = (2R)-3-sulfolactate + phosphate. The polypeptide is Probable 2-phosphosulfolactate phosphatase (Clostridium tetani (strain Massachusetts / E88)).